A 284-amino-acid chain; its full sequence is Riboflavin transporter (284 aa).

2 consecutive EamA domains span residues Val2–Ile129 and Leu141–Leu273. A run of 8 helical transmembrane segments spans residues Ser26–Val46, Phe58–Ala78, Val82–Ala102, Leu115–Ser135, Tyr136–Met156, Ala167–Ala187, Ile195–Leu215, and Gly247–Ile267.

This sequence belongs to the drug/metabolite transporter (DMT) superfamily. 10 TMS drug/metabolite exporter (DME) (TC 2.A.7.3) family.

It localises to the cell membrane. Its function is as follows. Transports riboflavin into the cell. This chain is Riboflavin transporter, found in Brucella anthropi (strain ATCC 49188 / DSM 6882 / CCUG 24695 / JCM 21032 / LMG 3331 / NBRC 15819 / NCTC 12168 / Alc 37) (Ochrobactrum anthropi).